We begin with the raw amino-acid sequence, 200 residues long: Cuticle protein 21.3 (200 aa).

10 tandem repeats follow at residues 98 to 101 (AAPA), 104 to 107 (AAPA), 116 to 119 (AAPA), 121 to 124 (AAPA), 133 to 136 (AAPA), 154 to 157 (AAPA), 166 to 169 (AAPA), 178 to 181 (AAPA), 184 to 187 (AAPA), and 196 to 199 (AAPA).

Its function is as follows. Component of the cuticle of migratory locust which contains more than 100 different structural proteins. In Locusta migratoria (Migratory locust), this protein is Cuticle protein 21.3.